A 297-amino-acid chain; its full sequence is MIPLSIRVPASTANVGPGFDSVGIALSLYLHVVVKEKSDKWQVIHSFEDSIPTDDKNLIVSTACKVCPSLSPHIIEVTSNIPLTRGLGSSASAIVAGIELANQLGKLNLTTDQKVQIATNFEGHPDNVAASILGGTVIGALDGKNVSVVRIESKELGVISLIPNEELNTDESRSVLPDVFPFHEAVKASAISNVLVAALCQKKWEVVGEMMEMDHFHEPYRLELVPLLPSIRKCAKEFGAYGTALSGAGPSIFILTPYEKRQEIAEQLARVFTSMKVCELEIDHRGITVNKKEHIGL.

Residue 82 to 92 (PLTRGLGSSAS) coordinates ATP.

The protein belongs to the GHMP kinase family. Homoserine kinase subfamily.

Its subcellular location is the cytoplasm. It carries out the reaction L-homoserine + ATP = O-phospho-L-homoserine + ADP + H(+). It functions in the pathway amino-acid biosynthesis; L-threonine biosynthesis; L-threonine from L-aspartate: step 4/5. In terms of biological role, catalyzes the ATP-dependent phosphorylation of L-homoserine to L-homoserine phosphate. The polypeptide is Homoserine kinase (Bacillus thuringiensis (strain Al Hakam)).